Here is a 557-residue protein sequence, read N- to C-terminus: GLYEVVVGVLGGGQLGRMMCQAASQMAIKVMVLDPQENCPASSLSYHHMVGSFDESTKVEEFAKRCGVLTVEIEHVDVDTLEKLEKQGVDCQPKASTVRIIQDKYQQKVALLPAWIPLPEFMKIDDLKAKKWDSLDIHFMIKSRRLAYDGRGNFVAKSEEELSSAVDALGGFDRGLYAEKWAPFVKELAVIVARGRDNSISCYPVVELFTGHICHIVKSPANVNWKTRELAIEVAFNAVKSLEVPGVFAVELFLTKEGEILLNEVAPRPHNSGHHTIESCHTSQFEQHLPAVVGLPLGDPSMKTPAAIMYNILGEEEGEHGFQLAHQLMKRAMTIPGASVHWYDKPEMRKQRKMCHITIVGSSLSSIESNLAILLEGKGLHDKTAVCSTLLGFIMGSDSDLPVMKSAAEMMEMFGVPHEVRIVSAHRTPELMFCYASSAHERGYQVIIAGAGGAAHLPGMVASLTPLPVVGVPVRASTLDGLDSLLSIVQMPRGVPVATVAVNNATNAGLLAVRMLGVANDNLLSRMSQYQEDQKEAVLREGDKLEKHGWESYLKNS.

An ATP-grasp domain is found at 108–293 (KVALLPAWIP…QFEQHLPAVV (186 aa)). 132-189 (WDSLDIHFMIKSRRLAYDGRGNFVAKSEEELSSAVDALGGFDRGLYAEKWAPFVKELA) contributes to the ATP binding site. The AIR carboxylase catalytic subunit stretch occupies residues 387–557 (CSTLLGFIMG…HGWESYLKNS (171 aa)).

In the C-terminal section; belongs to the AIR carboxylase family. Class I subfamily.

It is found in the plastid. Its subcellular location is the chloroplast. The catalysed reaction is 5-amino-1-(5-phospho-D-ribosyl)imidazole-4-carboxylate + H(+) = 5-amino-1-(5-phospho-beta-D-ribosyl)imidazole + CO2. It participates in purine metabolism; IMP biosynthesis via de novo pathway; 5-amino-1-(5-phospho-D-ribosyl)imidazole-4-carboxylate from 5-amino-1-(5-phospho-D-ribosyl)imidazole (carboxylase route): step 1/1. The sequence is that of Phosphoribosylaminoimidazole carboxylase, chloroplastic (PURKE) from Vigna aconitifolia (Moth bean).